A 372-amino-acid polypeptide reads, in one-letter code: L-selectin (372 aa).

Residues 1–28 form the signal peptide; the sequence is MIFPRKCQSTQRDLWNIFKLWGWTMLCC. The propeptide occupies 29 to 38; that stretch reads DFLAHHGTDC. Topologically, residues 39-332 are extracellular; it reads WTYHYSENPM…FSMIKEGDYN (294 aa). Residues 55–155 enclose the C-type lectin domain; it reads RFCRENYTDL…ACHKPKAALC (101 aa). Intrachain disulfides connect C57-C155, C128-C147, C128-C160, C160-C171, C165-C180, C182-C191, C197-C241, C227-C254, C259-C303, and C289-C316. N-linked (GlcNAc...) asparagine glycans are attached at residues N60 and N104. Ca(2+) contacts are provided by E118, N120, E126, N143, and D144. The EGF-like domain maps to 156-192; sequence YTASCQPWSCSGHGECVEIINNYTCNCDVGYYGPQCQ. A glycan (N-linked (GlcNAc...) asparagine) is linked at N177. 2 consecutive Sushi domains span residues 195–256 and 257–318; these read IQCE…TCQV and IQCE…ICQK. N226, N232, N246, and N271 each carry an N-linked (GlcNAc...) asparagine glycan. The chain crosses the membrane as a helical span at residues 333–355; that stretch reads PLFIPVAVMVTAFSGLAFIIWLA. The Cytoplasmic segment spans residues 356–372; sequence RRLKKGKKSKKSMDDPY.

It belongs to the selectin/LECAM family. Interaction with SELPLG/PSGL1 and PODXL2 is required for promoting recruitment and rolling of leukocytes. This interaction is dependent on the sialyl Lewis X glycan modification of SELPLG and PODXL2, and tyrosine sulfation modifications of SELPLG. Sulfation on 'Tyr-51' of SELPLG is important for L-selectin binding. Post-translationally, N-glycosylated.

It localises to the cell membrane. Its function is as follows. Calcium-dependent lectin that mediates cell adhesion by binding to glycoproteins on neighboring cells. Mediates the adherence of lymphocytes to endothelial cells of high endothelial venules in peripheral lymph nodes. Promotes initial tethering and rolling of leukocytes in endothelia. In Macaca mulatta (Rhesus macaque), this protein is L-selectin (SELL).